Reading from the N-terminus, the 122-residue chain is Large ribosomal subunit protein bL12 (122 aa).

The protein belongs to the bacterial ribosomal protein bL12 family. In terms of assembly, homodimer. Part of the ribosomal stalk of the 50S ribosomal subunit. Forms a multimeric L10(L12)X complex, where L10 forms an elongated spine to which 2 to 4 L12 dimers bind in a sequential fashion. Binds GTP-bound translation factors.

Its function is as follows. Forms part of the ribosomal stalk which helps the ribosome interact with GTP-bound translation factors. Is thus essential for accurate translation. This is Large ribosomal subunit protein bL12 from Borrelia hermsii (strain HS1 / DAH).